We begin with the raw amino-acid sequence, 231 residues long: Glutathione-S-transferase (231 aa).

The GST N-terminal domain maps to 15-98 (LFAVKGTATS…YIADAYDKDG (84 aa)).

The protein belongs to the GST superfamily.

The catalysed reaction is RX + glutathione = an S-substituted glutathione + a halide anion + H(+). Its function is as follows. Conjugation of reduced glutathione to a wide number of exogenous and endogenous hydrophobic electrophiles. This Alternaria alternata (Alternaria rot fungus) protein is Glutathione-S-transferase.